The chain runs to 263 residues: Inner membrane protein YpjD (263 aa).

The Periplasmic segment spans residues 1-3 (MPV). A helical membrane pass occupies residues 4 to 23 (FALLALVAYSVSLALIVPGL). Topologically, residues 24 to 34 (LQKNGGWRRMA) are cytoplasmic. The chain crosses the membrane as a helical span at residues 35–54 (IISAVIALVCHAIALEARIL). Topologically, residues 55–63 (PDGDSGQNL) are periplasmic. A helical membrane pass occupies residues 64-83 (SLLNVGSLVSLMICTVMTIV). Over 84 to 89 (ASRNRG) the chain is Cytoplasmic. A helical transmembrane segment spans residues 90–109 (WLLLPIVYAFALINLALATF). Residues 110–123 (MPNEYITHLEATPG) are Periplasmic-facing. A helical membrane pass occupies residues 124 to 146 (MLVHIGLSLFSYATLIIAALYAL). The Cytoplasmic segment spans residues 147 to 181 (QLAWIDYQLKNKKLAFNQEMPPLMSIERKMFHITQ). A helical transmembrane segment spans residues 182–201 (IGVVLLTLTLCTGLFYMHNL). The Periplasmic portion of the chain corresponds to 202–210 (FSMENIDKA). Residues 211-228 (VLSIVAWFVYIVLLWGHY) form a helical membrane-spanning segment. The Cytoplasmic segment spans residues 229-236 (HEGWRGRR). Residues 237–259 (VVWFNVAGAVILTLAYFGSRIVQ) traverse the membrane as a helical segment. Topologically, residues 260-263 (QLIS) are periplasmic.

It localises to the cell inner membrane. The sequence is that of Inner membrane protein YpjD (ypjD) from Escherichia coli O157:H7.